The primary structure comprises 313 residues: Adhesin MafA 2 (313 aa).

The N-terminal stretch at 1–14 (MKTLLLLIPLVLTA) is a signal peptide. The N-palmitoyl cysteine moiety is linked to residue cysteine 15. Cysteine 15 carries S-diacylglycerol cysteine lipidation. Over residues 282–297 (GDTTAQNRPDFKQNNG) the composition is skewed to polar residues. The interval 282–313 (GDTTAQNRPDFKQNNGKKPDVGNEVIRRRKGG) is disordered.

It belongs to the MafA family.

It localises to the cell outer membrane. This chain is Adhesin MafA 2 (mafA2), found in Neisseria meningitidis serogroup C / serotype 2a (strain ATCC 700532 / DSM 15464 / FAM18).